Reading from the N-terminus, the 966-residue chain is MEQDYKPHEIEKKWQKKWDESQIFQAEPDKREKFFITIPYPYLNGNLHAGHTRTFTIGDVVARHKRMLGYNVLYPMGFHVTGTPIVGLAELIANRDPQTMDVYERLHGIPGDILPTLDTPEKIVDYFKRESEKAMRNIGYSIDWRRKFTTTDPTYKKFIEWQYIRLGEKGLIVKGSHPVKWCPNDNNPVEDHDILYGEEATIVEYTLIKFRYKDLVLPCATLRPETTYGVTNLWVNPDVTYVKAKVTLDGNEEFWVVSKEAFRKLTFTDRTVEYIEDVPAKSIIGIKLTNPVTDDEVISLPASFVRPENGSGIVMSVPAHAPFDYLALRDLYDVDLSEYGITEDLRKIKLISLIKVPEFGEFPAKEIVESMGITSQKDPKAEEATKIVYRREFHGGVLKEITGKYEGQAVSKIKDILTRDFISSNTGETFYEFSEPVVCRCGTPCVVNMVKGQWFLNYSNPEWKAKVYKCLAQMRIVPEEYRVEFENKIDWLKDKACARRKGLGTHLPFDKEWLIESLGDSTIYMSYYIIARFIENGELKIENLTLSFFDYVLLGKGDSAAASADTGLSPELLEEIRRHFNYWYPVDLRSSGKDLVPNHLLFFLFHHVALFEEDKWPKALAVNGFVSLEGQKMSKSKGPILTMESAVSKYGADITRMYILSTAEQTQDADWQRTGIESARRQVDRFYSFAKGVIESGKRADLSTELKQIDRWILSRIQNYIRDTNSALYSIQTREAIQNSFFLLQNDVKWYQRRGGETLLYYVLDNWVRLMAPFTPHLCEEIWEAMGHKDPVSLAQYPLYNEGLIDDGAELAEEMIKGTLEDVEEIIRVTKMTPQKVHLYTAPTWKAEAIRCACEMQLECSLEVGNLIKKLMANPDLKRFGKEIPKFVQKIVPEFKSGSSDRYEILTGPDIDEQALLKESISFLEKEIGCSVEVHSADSPAFDPEKKARFAEPLRPAIYIEGKKKE.

The short motif at 41-51 is the 'HIGH' region element; the sequence is PYLNGNLHAGH. The short motif at 632–636 is the 'KMSKS' region element; that stretch reads KMSKS. ATP is bound at residue Lys-635.

Belongs to the class-I aminoacyl-tRNA synthetase family.

Its subcellular location is the cytoplasm. It catalyses the reaction tRNA(Leu) + L-leucine + ATP = L-leucyl-tRNA(Leu) + AMP + diphosphate. The polypeptide is Leucine--tRNA ligase (Methanosarcina barkeri (strain Fusaro / DSM 804)).